The primary structure comprises 159 residues: Large ribosomal subunit protein uL22 (159 aa).

It belongs to the universal ribosomal protein uL22 family. As to quaternary structure, part of the 50S ribosomal subunit.

In terms of biological role, this protein binds specifically to 23S rRNA. It makes multiple contacts with different domains of the 23S rRNA in the assembled 50S subunit and ribosome. Functionally, the globular domain of the protein is located near the polypeptide exit tunnel on the outside of the subunit, while an extended beta-hairpin is found that lines the wall of the exit tunnel in the center of the 70S ribosome. The polypeptide is Large ribosomal subunit protein uL22 (Ignicoccus hospitalis (strain KIN4/I / DSM 18386 / JCM 14125)).